The primary structure comprises 487 residues: Aspartyl/glutamyl-tRNA(Asn/Gln) amidotransferase subunit B (487 aa).

It belongs to the GatB/GatE family. GatB subfamily. In terms of assembly, heterotrimer of A, B and C subunits.

It carries out the reaction L-glutamyl-tRNA(Gln) + L-glutamine + ATP + H2O = L-glutaminyl-tRNA(Gln) + L-glutamate + ADP + phosphate + H(+). It catalyses the reaction L-aspartyl-tRNA(Asn) + L-glutamine + ATP + H2O = L-asparaginyl-tRNA(Asn) + L-glutamate + ADP + phosphate + 2 H(+). Its function is as follows. Allows the formation of correctly charged Asn-tRNA(Asn) or Gln-tRNA(Gln) through the transamidation of misacylated Asp-tRNA(Asn) or Glu-tRNA(Gln) in organisms which lack either or both of asparaginyl-tRNA or glutaminyl-tRNA synthetases. The reaction takes place in the presence of glutamine and ATP through an activated phospho-Asp-tRNA(Asn) or phospho-Glu-tRNA(Gln). The chain is Aspartyl/glutamyl-tRNA(Asn/Gln) amidotransferase subunit B from Leptospira biflexa serovar Patoc (strain Patoc 1 / Ames).